The following is a 56-amino-acid chain: Zinc finger mu-protein HVO_0758 (56 aa).

Zn(2+)-binding residues include cysteine 23, cysteine 26, cysteine 45, and cysteine 48. 2 consecutive short sequence motifs (c(P)XCG motif) follow at residues 23 to 27 (CSECG) and 45 to 49 (CADCG).

Monomer.

Its function is as follows. Zinc-binding protein that binds one zinc ion. Is involved in biofilm formation, swarming and glycerol metabolism regulation. The sequence is that of Zinc finger mu-protein HVO_0758 from Haloferax volcanii (strain ATCC 29605 / DSM 3757 / JCM 8879 / NBRC 14742 / NCIMB 2012 / VKM B-1768 / DS2) (Halobacterium volcanii).